A 490-amino-acid chain; its full sequence is Phenylacetaldehyde synthase (490 aa).

The L-phenylalanine site is built by Pro92, His193, and His308. Lys309 bears the N6-(pyridoxal phosphate)lysine mark. Phe338 is a binding site for L-phenylalanine.

The protein belongs to the group II decarboxylase family. Homodimer. Pyridoxal 5'-phosphate is required as a cofactor. In terms of tissue distribution, expressed in roots, rosette leaves, stems, cauline leaves and flowers.

The catalysed reaction is L-phenylalanine + O2 + H2O + H(+) = 2-phenylacetaldehyde + H2O2 + NH4(+) + CO2. The enzyme catalyses L-dopa + O2 + H2O + H(+) = 3,4-dihydroxyphenylacetaldehyde + H2O2 + NH4(+) + CO2. Functionally, bifunctional enzyme that catalyzes the decarboxylation of L-phenylalanine to 2-phenylethylamine, which is then oxidized to form 2-phenylacetaldehyde, a constituent of floral scent. 2-phenylacetaldehyde is a precursor of 2-phenylethanol, another constituent of floral scent. Catalyzes both the decarboxylation and deamination of L-dopa to 3,4-dihydroxylphenylacetaldehyde (DHPAA). The protein is Phenylacetaldehyde synthase of Arabidopsis thaliana (Mouse-ear cress).